The sequence spans 203 residues: Interferon type B (203 aa).

An N-terminal signal peptide occupies residues 1–27; the sequence is MTANHQSPGMHSILLLLLLPALTTTFS. 2 disulfides stabilise this stretch: Cys28–Cys125 and Cys57–Cys164. N-linked (GlcNAc...) asparagine glycans are attached at residues Asn37 and Asn160.

The protein belongs to the alpha/beta interferon family.

The protein resides in the secreted. In terms of biological role, has antiviral activities. This is Interferon type B (IFNB) from Gallus gallus (Chicken).